The primary structure comprises 493 residues: Aspartyl/glutamyl-tRNA(Asn/Gln) amidotransferase subunit B (493 aa).

The interval 473 to 493 is disordered; that stretch reads KSGGKANPKQAADLVNKRLTE.

This sequence belongs to the GatB/GatE family. GatB subfamily. In terms of assembly, heterotrimer of A, B and C subunits.

It carries out the reaction L-glutamyl-tRNA(Gln) + L-glutamine + ATP + H2O = L-glutaminyl-tRNA(Gln) + L-glutamate + ADP + phosphate + H(+). The enzyme catalyses L-aspartyl-tRNA(Asn) + L-glutamine + ATP + H2O = L-asparaginyl-tRNA(Asn) + L-glutamate + ADP + phosphate + 2 H(+). Functionally, allows the formation of correctly charged Asn-tRNA(Asn) or Gln-tRNA(Gln) through the transamidation of misacylated Asp-tRNA(Asn) or Glu-tRNA(Gln) in organisms which lack either or both of asparaginyl-tRNA or glutaminyl-tRNA synthetases. The reaction takes place in the presence of glutamine and ATP through an activated phospho-Asp-tRNA(Asn) or phospho-Glu-tRNA(Gln). The sequence is that of Aspartyl/glutamyl-tRNA(Asn/Gln) amidotransferase subunit B from Treponema denticola (strain ATCC 35405 / DSM 14222 / CIP 103919 / JCM 8153 / KCTC 15104).